The chain runs to 508 residues: MGLPWYRVHTVVLNDPGRLLAVHIMHTALVSGWAGSMALYELAVFDPSDPVLDPMWRQGMFVIPFMTRLGITDSWGGWSISGGTVTNPGIWSYEGVAGAHIVFSGLCFLAAIWHWVYWDLAIFSDDRTGKPSLDLPKIFGIHLFLAGVACFGFGAFHVTGLYGPGIWVSDPYGLTGKVQAVNPAWGAEGFDPFVPGGIASHHIAAGTLGILAGLFHLSVRPPQRLYKGLRMGNIETVLSSSIAAVFFAAFVVAGTMWYGSATTPIELFGPTRYQWDQGYFQQEIYRRVSNGLAENLSLSEAWSKIPEKLAFYDYIGNNPAKGGLFRAGSMDNGDGIAVGWLGHPVFRDKEGRELFVRRMPTFFETFPVVLVDEEGIVRADVPFRRAESKYSVEQVGVTVEFYGGELNGVSYSDPATVKKYARRSQLGEIFELDRATLKSDGVFRSSPRGWFTFGHATFALLFFFGHIWHGARTLFRDVFAGIDPDLDAQVEFGTFQKVGDPTTRKQAV.

The next 6 helical transmembrane spans lie at 21 to 36 (AVHIMHTALVSGWAGS), 101 to 115 (IVFSGLCFLAAIWHW), 140 to 156 (GIHLFLAGVACFGFGAF), 203 to 218 (IAAGTLGILAGLFHLS), 237 to 252 (VLSSSIAAVFFAAFVV), and 457 to 472 (TFALLFFFGHIWHGAR).

This sequence belongs to the PsbB/PsbC family. PsbB subfamily. In terms of assembly, PSII is composed of 1 copy each of membrane proteins PsbA, PsbB, PsbC, PsbD, PsbE, PsbF, PsbH, PsbI, PsbJ, PsbK, PsbL, PsbM, PsbT, PsbX, PsbY, PsbZ, Psb30/Ycf12, at least 3 peripheral proteins of the oxygen-evolving complex and a large number of cofactors. It forms dimeric complexes. Requires Binds multiple chlorophylls. PSII binds additional chlorophylls, carotenoids and specific lipids. as cofactor.

It is found in the plastid. It localises to the chloroplast thylakoid membrane. One of the components of the core complex of photosystem II (PSII). It binds chlorophyll and helps catalyze the primary light-induced photochemical processes of PSII. PSII is a light-driven water:plastoquinone oxidoreductase, using light energy to abstract electrons from H(2)O, generating O(2) and a proton gradient subsequently used for ATP formation. The sequence is that of Photosystem II CP47 reaction center protein from Lolium perenne (Perennial ryegrass).